The sequence spans 332 residues: Glycerol-3-phosphate dehydrogenase [NAD(P)+] (332 aa).

NADPH-binding residues include serine 11, phenylalanine 12, arginine 32, and lysine 106. Positions 106, 134, and 136 each coordinate sn-glycerol 3-phosphate. Alanine 138 provides a ligand contact to NADPH. The sn-glycerol 3-phosphate site is built by lysine 189, aspartate 242, serine 252, arginine 253, and asparagine 254. Lysine 189 functions as the Proton acceptor in the catalytic mechanism. Arginine 253 provides a ligand contact to NADPH. Valine 277 and glutamate 279 together coordinate NADPH.

Belongs to the NAD-dependent glycerol-3-phosphate dehydrogenase family.

Its subcellular location is the cytoplasm. It catalyses the reaction sn-glycerol 3-phosphate + NAD(+) = dihydroxyacetone phosphate + NADH + H(+). The enzyme catalyses sn-glycerol 3-phosphate + NADP(+) = dihydroxyacetone phosphate + NADPH + H(+). It functions in the pathway membrane lipid metabolism; glycerophospholipid metabolism. Its function is as follows. Catalyzes the reduction of the glycolytic intermediate dihydroxyacetone phosphate (DHAP) to sn-glycerol 3-phosphate (G3P), the key precursor for phospholipid synthesis. In Clostridium acetobutylicum (strain ATCC 824 / DSM 792 / JCM 1419 / IAM 19013 / LMG 5710 / NBRC 13948 / NRRL B-527 / VKM B-1787 / 2291 / W), this protein is Glycerol-3-phosphate dehydrogenase [NAD(P)+].